A 383-amino-acid chain; its full sequence is Probable sphingolipid long chain base-responsive protein pil2 (383 aa).

Serine 162 is subject to Phosphoserine. 2 disordered regions span residues 292–336 and 356–383; these read PRTD…EDYQ and GEED…PIAA. The segment covering 311 to 324 has biased composition (low complexity); sequence TTSGTTHSYTSTGS. Polar residues-rich tracts occupy residues 325-336 and 368-383; these read KRYSQMGTEDYQ and VAET…PIAA.

Phosphorylated by ksg1 and ppk21. Phosphorylation is regulated by sphingolipid long chain bases (LCBs).

Functionally, negative regulator of cell wall integrity (CWI) in unstressed cells, probably by inhibiting protein kinase ksg1/ppk21 activity and regulating their downstream CWI pathways pck2-MAP kinase pathway and protein kinase gad8 pathway. Activity may be regulated by the transient increase of sphingolipid long chain bases (LCBs) during heat stress. This chain is Probable sphingolipid long chain base-responsive protein pil2 (pil2), found in Schizosaccharomyces pombe (strain 972 / ATCC 24843) (Fission yeast).